The sequence spans 119 residues: Large ribosomal subunit protein uL22 (119 aa).

Belongs to the universal ribosomal protein uL22 family. As to quaternary structure, part of the 50S ribosomal subunit.

Its function is as follows. This protein binds specifically to 23S rRNA; its binding is stimulated by other ribosomal proteins, e.g. L4, L17, and L20. It is important during the early stages of 50S assembly. It makes multiple contacts with different domains of the 23S rRNA in the assembled 50S subunit and ribosome. The globular domain of the protein is located near the polypeptide exit tunnel on the outside of the subunit, while an extended beta-hairpin is found that lines the wall of the exit tunnel in the center of the 70S ribosome. The protein is Large ribosomal subunit protein uL22 of Chlorobium chlorochromatii (strain CaD3).